The sequence spans 139 residues: Holo-[acyl-carrier-protein] synthase (139 aa).

2 residues coordinate Mg(2+): aspartate 8 and glutamate 61.

This sequence belongs to the P-Pant transferase superfamily. AcpS family. Mg(2+) serves as cofactor.

It localises to the cytoplasm. The catalysed reaction is apo-[ACP] + CoA = holo-[ACP] + adenosine 3',5'-bisphosphate + H(+). Transfers the 4'-phosphopantetheine moiety from coenzyme A to a Ser of acyl-carrier-protein. This chain is Holo-[acyl-carrier-protein] synthase, found in Nitrobacter hamburgensis (strain DSM 10229 / NCIMB 13809 / X14).